A 126-amino-acid chain; its full sequence is Fluoride-specific ion channel FluC (126 aa).

A run of 3 helical transmembrane segments spans residues 35-55 (WWTL…IGLL), 71-91 (VGML…WLLF), and 101-121 (LYVV…MILI). Na(+) is bound by residues G75 and T78.

Belongs to the fluoride channel Fluc/FEX (TC 1.A.43) family.

It is found in the cell inner membrane. It carries out the reaction fluoride(in) = fluoride(out). Na(+) is not transported, but it plays an essential structural role and its presence is essential for fluoride channel function. Its function is as follows. Fluoride-specific ion channel. Important for reducing fluoride concentration in the cell, thus reducing its toxicity. The protein is Fluoride-specific ion channel FluC of Sphingopyxis alaskensis (strain DSM 13593 / LMG 18877 / RB2256) (Sphingomonas alaskensis).